The primary structure comprises 619 residues: Threonine--tRNA ligase (619 aa).

Positions 1-143 (MQLLLIHSDF…SRSIRIGEGE (143 aa)) are editing domain. The tract at residues 201 to 500 (PHVELMRRLE…AANGGLPMLP (300 aa)) is catalytic. Cysteine 293, histidine 345, and histidine 469 together coordinate Zn(2+).

The protein belongs to the class-II aminoacyl-tRNA synthetase family. Homodimer. Zn(2+) serves as cofactor.

Its subcellular location is the cytoplasm. The enzyme catalyses tRNA(Thr) + L-threonine + ATP = L-threonyl-tRNA(Thr) + AMP + diphosphate + H(+). Catalyzes the attachment of threonine to tRNA(Thr) in a two-step reaction: L-threonine is first activated by ATP to form Thr-AMP and then transferred to the acceptor end of tRNA(Thr). Also edits incorrectly charged L-seryl-tRNA(Thr). This Methanothrix thermoacetophila (strain DSM 6194 / JCM 14653 / NBRC 101360 / PT) (Methanosaeta thermophila) protein is Threonine--tRNA ligase.